The following is a 638-amino-acid chain: 1-deoxy-D-xylulose-5-phosphate synthase (638 aa).

Thiamine diphosphate is bound by residues His-75 and 116-118 (AHS). Asp-147 is a Mg(2+) binding site. Thiamine diphosphate is bound by residues 148–149 (GA), Asn-177, Tyr-288, and Glu-370. Asn-177 provides a ligand contact to Mg(2+).

Belongs to the transketolase family. DXPS subfamily. As to quaternary structure, homodimer. It depends on Mg(2+) as a cofactor. The cofactor is thiamine diphosphate.

It catalyses the reaction D-glyceraldehyde 3-phosphate + pyruvate + H(+) = 1-deoxy-D-xylulose 5-phosphate + CO2. It functions in the pathway metabolic intermediate biosynthesis; 1-deoxy-D-xylulose 5-phosphate biosynthesis; 1-deoxy-D-xylulose 5-phosphate from D-glyceraldehyde 3-phosphate and pyruvate: step 1/1. Functionally, catalyzes the acyloin condensation reaction between C atoms 2 and 3 of pyruvate and glyceraldehyde 3-phosphate to yield 1-deoxy-D-xylulose-5-phosphate (DXP). This is 1-deoxy-D-xylulose-5-phosphate synthase from Cupriavidus pinatubonensis (strain JMP 134 / LMG 1197) (Cupriavidus necator (strain JMP 134)).